The chain runs to 117 residues: Large ribosomal subunit protein bL20 (117 aa).

This sequence belongs to the bacterial ribosomal protein bL20 family.

In terms of biological role, binds directly to 23S ribosomal RNA and is necessary for the in vitro assembly process of the 50S ribosomal subunit. It is not involved in the protein synthesizing functions of that subunit. In Vibrio cholerae serotype O1 (strain ATCC 39541 / Classical Ogawa 395 / O395), this protein is Large ribosomal subunit protein bL20.